Here is a 414-residue protein sequence, read N- to C-terminus: Putative competence-damage inducible protein (414 aa).

It belongs to the CinA family.

The protein is Putative competence-damage inducible protein of Listeria monocytogenes serotype 4b (strain CLIP80459).